The following is a 605-amino-acid chain: MAALATSQLVATRAGLGVPDASTFRRGAAQGLRGARASAAADTLSMRTSARAAPRHQQQARRGGRFPSLVVCASAGMNVVFVGAEMAPWSKTGGLGDVLGGLPPAMAANGHRVMVVSPRYDQYKDAWDTSVVSEIKMGDGYETVRFFHCYKRGVDRVFVDHPLFLERVWGKTEEKIYGPVAGTDYRDNQLRFSLLCQAALEAPRILSLNNNPYFSGPYGEDVVFVCNDWHTGPLSCYLKSNYQSHGIYRDAKTAFCIHNISYQGRFAFSDYPELNLPERFKSSFDFIDGYEKPVEGRKINWMKAGILEADRVLTVSPYYAEELISGIARGCELDNIMRLTGITGIVNGMDVSEWDPSRDKYIAVKYDVSTAVEAKALNKEALQAEVGLPVDRNIPLVAFIGRLEEQKGPDVMAAAIPQLMEMVEDVQIVLLGTGKKKFERMLMSAEEKFPGKVRAVVKFNAALAHHIMAGADVLAVTSRFEPCGLIQLQGMRYGTPCACASTGGLVDTIIEGKTGFHMGRLSVDCNVVEPADVKKVATTLQRAIKVVGTPAYEEMVRNCMIQDLSWKGPAKNWENVLLSLGVAGGEPGVEGEEIAPLAKENVAAP.

Residues 1-72 (MAALATSQLV…GGRFPSLVVC (72 aa)) constitute a chloroplast transit peptide. Lysine 91 serves as a coordination point for ADP-alpha-D-glucose.

It belongs to the glycosyltransferase 1 family. Bacterial/plant glycogen synthase subfamily.

It localises to the plastid. The protein localises to the chloroplast. It is found in the amyloplast. The catalysed reaction is an NDP-alpha-D-glucose + [(1-&gt;4)-alpha-D-glucosyl](n) = [(1-&gt;4)-alpha-D-glucosyl](n+1) + a ribonucleoside 5'-diphosphate + H(+). Its pathway is glycan biosynthesis; starch biosynthesis. In terms of biological role, required for the synthesis of amylose in endosperm. The chain is Granule-bound starch synthase 1, chloroplastic/amyloplastic (WAXY) from Zea mays (Maize).